The following is a 464-amino-acid chain: Protein FAM90A3 (464 aa).

3 disordered regions span residues 1–42 (MMAR…DPRL), 70–389 (PATL…HDGA), and 411–437 (APSF…SEAP). 2 stretches are compositionally biased toward basic and acidic residues: residues 74 to 89 (GKKE…KPRV) and 97 to 114 (NKDK…DPQR). Residues 180–197 (LASLSPLRKASLSSSSSL) are compositionally biased toward low complexity.

This sequence belongs to the FAM90 family.

The chain is Protein FAM90A3 from Homo sapiens (Human).